Here is a 238-residue protein sequence, read N- to C-terminus: Uridylate kinase (238 aa).

12 to 15 (KLSG) is a binding site for ATP. UMP is bound at residue Gly-54. 2 residues coordinate ATP: Gly-55 and Arg-59. UMP contacts are provided by residues Asp-74 and 135–142 (TGNPFFTT). Residues Thr-162, Asn-163, Tyr-168, and Asp-171 each coordinate ATP.

Belongs to the UMP kinase family. As to quaternary structure, homohexamer.

The protein localises to the cytoplasm. The catalysed reaction is UMP + ATP = UDP + ADP. It participates in pyrimidine metabolism; CTP biosynthesis via de novo pathway; UDP from UMP (UMPK route): step 1/1. With respect to regulation, inhibited by UTP. In terms of biological role, catalyzes the reversible phosphorylation of UMP to UDP. The sequence is that of Uridylate kinase from Rhodopseudomonas palustris (strain BisB18).